Consider the following 34-residue polypeptide: MEALVYTFLLVSTLGIIFFAIFFREPPTIRTKKN.

The helical transmembrane segment at 3-23 threads the bilayer; sequence ALVYTFLLVSTLGIIFFAIFF.

It belongs to the PsbT family. PSII is composed of 1 copy each of membrane proteins PsbA, PsbB, PsbC, PsbD, PsbE, PsbF, PsbH, PsbI, PsbJ, PsbK, PsbL, PsbM, PsbT, PsbY, PsbZ, Psb30/Ycf12, at least 3 peripheral proteins of the oxygen-evolving complex and a large number of cofactors. It forms dimeric complexes.

The protein resides in the plastid. Its subcellular location is the chloroplast thylakoid membrane. Functionally, found at the monomer-monomer interface of the photosystem II (PS II) dimer, plays a role in assembly and dimerization of PSII. PSII is a light-driven water plastoquinone oxidoreductase, using light energy to abstract electrons from H(2)O, generating a proton gradient subsequently used for ATP formation. The sequence is that of Photosystem II reaction center protein T from Solanum lycopersicum (Tomato).